The chain runs to 281 residues: MAVNVYSTSVTSENLSRHDMLAWVNDSLHLNYTKIEQLCSGAAYCQFMDMLFPGCVHLRKVKFQAKLEHEYIHNFKVLQAAFKKMGVDKIIPVEKLVKGKFQDNFEFIQWFKKFFDANYDGKDYNPLLARQGQDVAPPPNPGDQIFNKSKKLIGTAVPQRTSPTGPKNMQTSGRLSNVAPPCILRKNPPSARNGGHEADAQILELNQQLLDLKLTVDGLEKERDFYFSKLRDIELICQEHESENSPVISGIIGILYATEEGFAPPEDDEIEEHQQEDQDEY.

The region spanning 14-116 is the Calponin-homology (CH) domain; it reads NLSRHDMLAW…FIQWFKKFFD (103 aa). Disordered stretches follow at residues 157–181 and 260–281; these read VPQR…VAPP and EGFA…QDEY. Polar residues predominate over residues 158–175; that stretch reads PQRTSPTGPKNMQTSGRL. Phosphoserine is present on residues S162 and S176. Positions 194 to 264 constitute an EB1 C-terminal domain; it reads GGHEADAQIL…LYATEEGFAP (71 aa). An APC-binding region spans residues 217 to 260; it reads DGLEKERDFYFSKLRDIELICQEHESENSPVISGIIGILYATEE. The DCTN1-binding stretch occupies residues 217 to 281; it reads DGLEKERDFY…EHQQEDQDEY (65 aa). The segment covering 272–281 has biased composition (basic and acidic residues); the sequence is EHQQEDQDEY.

Belongs to the MAPRE family. In terms of assembly, homodimer. Heterodimer with MAPRE1. Binds monomeric and polymerized GTP-bound tubulin. Interacts with DCTN1 and SRCIN1. Binds to the C-terminal domain of APC. Interacts (via C-terminus) with CLIP1. Interacts with SLAIN2. Interacts with SLAIN1. Interacts with APC2. Interacts with AKAP9. Interacts with PDE4DIP isoform 2/MMG8/SMYLE; this interaction is required for its recruitment to the Golgi apparatus.

It localises to the cytoplasm. The protein resides in the cytoskeleton. Its function is as follows. Plus-end tracking protein (+TIP) that binds to the plus-end of microtubules and regulates the dynamics of the microtubule cytoskeleton. Promotes microtubule growth. May be involved in spindle function by stabilizing microtubules and anchoring them at centrosomes. Also acts as a regulator of minus-end microtubule organization: interacts with the complex formed by AKAP9 and PDE4DIP, leading to recruit CAMSAP2 to the Golgi apparatus, thereby tethering non-centrosomal minus-end microtubules to the Golgi, an important step for polarized cell movement. Promotes elongation of CAMSAP2-decorated microtubule stretches on the minus-end of microtubules. The protein is Microtubule-associated protein RP/EB family member 3 (Mapre3) of Mus musculus (Mouse).